The primary structure comprises 247 residues: Carboxy-S-adenosyl-L-methionine synthase (247 aa).

S-adenosyl-L-methionine contacts are provided by residues tyrosine 40, 65–67 (GAS), 90–91 (DN), 122–123 (DI), asparagine 137, and arginine 204.

The protein belongs to the class I-like SAM-binding methyltransferase superfamily. Cx-SAM synthase family. As to quaternary structure, homodimer.

The enzyme catalyses prephenate + S-adenosyl-L-methionine = carboxy-S-adenosyl-L-methionine + 3-phenylpyruvate + H2O. Catalyzes the conversion of S-adenosyl-L-methionine (SAM) to carboxy-S-adenosyl-L-methionine (Cx-SAM). The protein is Carboxy-S-adenosyl-L-methionine synthase of Ectopseudomonas mendocina (strain ymp) (Pseudomonas mendocina).